Consider the following 228-residue polypeptide: MDIRPLEEHLGISFQQKALLKEAFTHSSYVNEHRKQRLSDNERLEFLGDAVLELAVSQYLYRNNKDMPEGEMTKLRAAIVCEPSLKNFAEELEFGKFLRLGKGEQQTGGRERPAILADAFEAFLGALYLDQGFDNVLDFLNIHVFPKLTTGAFSHAMDYKSQLQEFVQQHKDQKIEYRIIEEKGPSHNKEFVAEVVIQEKAAGIGTGRTKKEAEQRAAKNALDSINNS.

The 130-residue stretch at 3 to 132 (IRPLEEHLGI…FLGALYLDQG (130 aa)) folds into the RNase III domain. E45 is a Mg(2+) binding site. The active site involves D49. Mg(2+) is bound by residues D118 and E121. E121 is a catalytic residue. Positions 158–227 (DYKSQLQEFV…AKNALDSINN (70 aa)) constitute a DRBM domain. The segment at 205–228 (GTGRTKKEAEQRAAKNALDSINNS) is disordered.

Belongs to the ribonuclease III family. As to quaternary structure, homodimer. Requires Mg(2+) as cofactor.

It localises to the cytoplasm. It catalyses the reaction Endonucleolytic cleavage to 5'-phosphomonoester.. In terms of biological role, digests double-stranded RNA. Involved in the processing of primary rRNA transcript to yield the immediate precursors to the large and small rRNAs (23S and 16S). Processes some mRNAs, and tRNAs when they are encoded in the rRNA operon. Processes pre-crRNA and tracrRNA of type II CRISPR loci if present in the organism. This Oceanobacillus iheyensis (strain DSM 14371 / CIP 107618 / JCM 11309 / KCTC 3954 / HTE831) protein is Ribonuclease 3.